A 312-amino-acid polypeptide reads, in one-letter code: DNA primase small subunit PriS (312 aa).

Catalysis depends on residues Asp88, Asp90, and Asp215.

The protein belongs to the eukaryotic-type primase small subunit family. Heterodimer of a small subunit (PriS) and a large subunit (PriL). Mg(2+) is required as a cofactor. The cofactor is Mn(2+).

Catalytic subunit of DNA primase, an RNA polymerase that catalyzes the synthesis of short RNA molecules used as primers for DNA polymerase during DNA replication. The small subunit contains the primase catalytic core and has DNA synthesis activity on its own. Binding to the large subunit stabilizes and modulates the activity, increasing the rate of DNA synthesis while decreasing the length of the DNA fragments, and conferring RNA synthesis capability. The DNA polymerase activity may enable DNA primase to also catalyze primer extension after primer synthesis. May also play a role in DNA repair. In Pyrobaculum calidifontis (strain DSM 21063 / JCM 11548 / VA1), this protein is DNA primase small subunit PriS.